The sequence spans 373 residues: Chaperone protein DnaJ (373 aa).

The J domain occupies 4 to 68 (DFYEILGVSR…QARANYDRFG (65 aa)). The CR-type zinc finger occupies 132–214 (GGEKEIRINH…CGGQGHIQVS (83 aa)). 8 residues coordinate Zn(2+): C145, C148, C162, C165, C188, C191, C202, and C205. CXXCXGXG motif repeat units follow at residues 145–152 (CKTCQGTG), 162–169 (CSTCGGVG), 188–195 (CPTCGGSG), and 202–209 (CESCGGQG).

It belongs to the DnaJ family. As to quaternary structure, homodimer. Requires Zn(2+) as cofactor.

The protein resides in the cytoplasm. Participates actively in the response to hyperosmotic and heat shock by preventing the aggregation of stress-denatured proteins and by disaggregating proteins, also in an autonomous, DnaK-independent fashion. Unfolded proteins bind initially to DnaJ; upon interaction with the DnaJ-bound protein, DnaK hydrolyzes its bound ATP, resulting in the formation of a stable complex. GrpE releases ADP from DnaK; ATP binding to DnaK triggers the release of the substrate protein, thus completing the reaction cycle. Several rounds of ATP-dependent interactions between DnaJ, DnaK and GrpE are required for fully efficient folding. Also involved, together with DnaK and GrpE, in the DNA replication of plasmids through activation of initiation proteins. The protein is Chaperone protein DnaJ of Thermosynechococcus vestitus (strain NIES-2133 / IAM M-273 / BP-1).